A 371-amino-acid chain; its full sequence is uncharacterized protein (371 aa).

A disordered region spans residues 339 to 371 (KVTHEDLVKNRPRSPVRPPIPATAKTPDLPERH).

This is an uncharacterized protein from Escherichia coli (strain K12).